The following is an 895-amino-acid chain: WD repeat-containing protein 36 (895 aa).

WD repeat units lie at residues 30–63 (VVRF…LVAV), 72–101 (CCMA…IVHT), 110–143 (HFLQ…LQLT), 152–186 (SAIL…LLYT), 193–230 (GVTA…MKFR), 237–272 (TSIS…INQM), 277–320 (STAI…RFRM), and 327–361 (TNIR…FNKS). 2 positions are modified to phosphoserine: Ser382 and Ser399. WD repeat units follow at residues 389–428 (TKFA…GAYF), 441–475 (ATAV…HRGS), 486–522 (VRGV…HSVS), 527–562 (PNIM…VREF), 564–605 (GHQG…DCFL), and 607–645 (DSAP…SVVS).

In terms of assembly, part of the small subunit (SSU) processome, composed of more than 70 proteins and the RNA chaperone small nucleolar RNA (snoRNA) U3. As to expression, expressed in heart, placenta, liver, skeletal muscle, kidney and pancreas. In ocular tissues, strong expression in iris, sclera, ciliary muscle, ciliary body, retina and optic nerve.

The protein localises to the nucleus. It localises to the nucleolus. Functionally, part of the small subunit (SSU) processome, first precursor of the small eukaryotic ribosomal subunit. During the assembly of the SSU processome in the nucleolus, many ribosome biogenesis factors, an RNA chaperone and ribosomal proteins associate with the nascent pre-rRNA and work in concert to generate RNA folding, modifications, rearrangements and cleavage as well as targeted degradation of pre-ribosomal RNA by the RNA exosome. Involved in the nucleolar processing of SSU 18S rRNA. Involved in T-cell activation and highly coregulated with IL2. In Homo sapiens (Human), this protein is WD repeat-containing protein 36.